The primary structure comprises 1893 residues: Transcription initiation factor TFIID subunit 1 (1893 aa).

The Protein kinase 1 domain maps to 1–435; the sequence is MGPGCDLLLR…VTQLHWEDDI (435 aa). S137 is subject to Phosphoserine; by autocatalysis. Disordered regions lie at residues 155–184 and 197–224; these read LMPPPPPPPGPMKKDKDQDSITGVSENGEG and ASEKVDFSSSSDSESEMGPQEATQAESE. Residues 156–165 show a composition bias toward pro residues; sequence MPPPPPPPGP. Low complexity predominate over residues 197-208; the sequence is ASEKVDFSSSSD. S328 carries the phosphoserine; by autocatalysis modification. Residues 534-557 form a disordered region; sequence IPDEKEEATSNSPSKESKKESSLK. Residues 538–997 form a histone acetyltransferase (HAT) region; that stretch reads KEEATSNSPS…KIPNKPTQQK (460 aa). The residue at position 565 (K565) is an N6-acetyllysine. Residues K570 and K583 each participate in a glycyl lysine isopeptide (Lys-Gly) (interchain with G-Cter in SUMO2) cross-link. Disordered stretches follow at residues 990–1009, 1128–1148, 1158–1177, and 1254–1278; these read PNKPTQQKDDKEPQPVKKTV, MLQNKKTSSQLSREREEQERK, GSAASGNNHRDDDTASVTSL, and RLKRNQEKEKLKGPPEKKPKKMKER. Composition is skewed to basic and acidic residues over residues 995–1004 and 1139–1148; these read QQKDDKEPQP and SREREEQERK. Positions 1216-1294 form a DNA-binding region, HMG box; involved in promoter binding; the sequence is VRIRTTKDEE…CGACGAIGHM (79 aa). Positions 1254–1270 are enriched in basic and acidic residues; it reads RLKRNQEKEKLKGPPEK. Residues 1363–1650 form an interaction with ASF1A and ASF1B region; sequence VLKFPKQQLP…TAKEAALEEA (288 aa). Positions 1372 to 1379 match the Nuclear localization signal motif; sequence PPKKKRRV. Bromo domains lie at 1397-1505 and 1519-1628; these read RRRT…LKEK and LLDD…LTEY. The Protein kinase 2 domain occupies 1446-1893; that stretch reads MDLQTLRENV…AGDSDLDSDE (448 aa). The disordered stretch occupies residues 1651–1676; it reads ELESLDPMTPGPYTPQPPDLYDTNTS. Residues 1659–1668 are compositionally biased toward pro residues; sequence TPGPYTPQPP. Phosphoserine is present on residues S1690, S1693, A1718, E1721, and G1723. The interval 1696-1893 is disordered; it reads DIPSATPEKQ…AGDSDLDSDE (198 aa). 2 stretches are compositionally biased toward acidic residues: residues 1709–1723 and 1741–1756; these read EGEDGDGDLADEEEG and EGEDDEEDAGSDEEGD. Residues S1799, S1802, and S1820 each carry the phosphoserine modification. Residues 1830-1840 are compositionally biased toward polar residues; that stretch reads KSNTQDTSFSS. Residues 1846 to 1857 are compositionally biased toward acidic residues; that stretch reads VSEEEEDEEEEE. S1847 carries the phosphoserine modification. Positions 1860–1869 are enriched in polar residues; sequence SGPSVLSQVH.

Belongs to the TAF1 family. In terms of assembly, component of the TFIID basal transcription factor complex, composed of TATA-box-binding protein TBP, and a number of TBP-associated factors (TAFs), including TAF1, TAF2, TAF3, TAF4, TAF5, TAF6, TAF7, TAF8, TAF9, TAF10, TAF11, TAF12 and TAF13. Interacts with TAF7; the interaction is direct. TAF1, when part of the TFIID complex, interacts with C-terminus of TP53. Part of a TFIID-containing RNA polymerase II pre-initiation complex that is composed of TBP and at least GTF2A1, GTF2A2, GTF2E1, GTF2E2, GTF2F1, GTF2H2, GTF2H3, GTF2H4, GTF2H5, GTF2B, TCEA1, ERCC2, ERCC3, TAF1, TAF2, TAF3, TAF4, TAF5, TAF6, TAF7, TAF8, TAF9, TAF10, TAF11, TAF12 and TAF13. Component of some MLL1/MLL complex, at least composed of the core components KMT2A/MLL1, ASH2L, HCFC1/HCF1, WDR5 and RBBP5, as well as the facultative components BACC1, CHD8, E2F6, HSP70, INO80C, KANSL1, LAS1L, MAX, MCRS1, MGA, KAT8/MOF, PELP1, PHF20, PRP31, RING2, RUVB1/TIP49A, RUVB2/TIP49B, SENP3, TAF1, TAF4, TAF6, TAF7, TAF9 and TEX10. RB1 interacts with the N-terminal domain of TAF1. Interacts with ASF1A and ASF1B. Interacts (via bromo domains) with acetylated lysine residues on the N-terminus of histone H1.4, H2A, H2B, H3 and H4 (in vitro). (Microbial infection) Interacts with SV40 Large T antigen. As to quaternary structure, (Microbial infection) Interacts with herpes simplex virus 1 ICP4. It depends on Mg(2+) as a cofactor. In terms of processing, phosphorylated by casein kinase II in vitro.

Its subcellular location is the nucleus. It catalyses the reaction L-seryl-[protein] + ATP = O-phospho-L-seryl-[protein] + ADP + H(+). The catalysed reaction is L-threonyl-[protein] + ATP = O-phospho-L-threonyl-[protein] + ADP + H(+). It carries out the reaction L-lysyl-[protein] + acetyl-CoA = N(6)-acetyl-L-lysyl-[protein] + CoA + H(+). Autophosphorylates on Ser residues. Inhibited by retinoblastoma tumor suppressor protein, RB1. Binding to TAF7 or CIITA inhibits the histone acetyltransferase activity. Functionally, the TFIID basal transcription factor complex plays a major role in the initiation of RNA polymerase II (Pol II)-dependent transcription. TFIID recognizes and binds promoters with or without a TATA box via its subunit TBP, a TATA-box-binding protein, and promotes assembly of the pre-initiation complex (PIC). The TFIID complex consists of TBP and TBP-associated factors (TAFs), including TAF1, TAF2, TAF3, TAF4, TAF5, TAF6, TAF7, TAF8, TAF9, TAF10, TAF11, TAF12 and TAF13. TAF1 is the largest component and core scaffold of the TFIID complex, involved in nucleating complex assembly. TAF1 forms a promoter DNA binding subcomplex of TFIID, together with TAF7 and TAF2. Contains novel N- and C-terminal Ser/Thr kinase domains which can autophosphorylate or transphosphorylate other transcription factors. Phosphorylates TP53 on 'Thr-55' which leads to MDM2-mediated degradation of TP53. Phosphorylates GTF2A1 and GTF2F1 on Ser residues. Possesses DNA-binding activity. Essential for progression of the G1 phase of the cell cycle. Exhibits histone acetyltransferase activity towards histones H3 and H4. In Homo sapiens (Human), this protein is Transcription initiation factor TFIID subunit 1.